A 191-amino-acid chain; its full sequence is Adenylate kinase (191 aa).

12 to 17 provides a ligand contact to ATP; that stretch reads GSGKTT. The NMP stretch occupies residues 33-62; the sequence is STGDLLRAEVASGSELGKLIDSFISKGNLV. AMP contacts are provided by residues T34, R39, 60–62, 87–90, and Q94; these read NLV and GYPR. An LID region spans residues 129–135; that stretch reads GRARGAD. Residue R130 coordinates ATP. 2 residues coordinate AMP: R132 and R144. R172 serves as a coordination point for ATP.

It belongs to the adenylate kinase family. As to quaternary structure, monomer.

The protein resides in the cytoplasm. It catalyses the reaction AMP + ATP = 2 ADP. It functions in the pathway purine metabolism; AMP biosynthesis via salvage pathway; AMP from ADP: step 1/1. In terms of biological role, catalyzes the reversible transfer of the terminal phosphate group between ATP and AMP. Plays an important role in cellular energy homeostasis and in adenine nucleotide metabolism. This is Adenylate kinase from Campylobacter fetus subsp. fetus (strain 82-40).